The primary structure comprises 160 residues: Non-secretory ribonuclease (160 aa).

The signal sequence occupies residues 1 to 27; the sequence is MVPKLFTSQICLLLLLGLMGVEGSLHA. C-linked (Man) tryptophan glycosylation is present at tryptophan 34. The active-site Proton acceptor is histidine 42. Asparagine 44 carries N-linked (GlcNAc...) asparagine glycosylation. 4 cysteine pairs are disulfide-bonded: cysteine 50–cysteine 110, cysteine 64–cysteine 122, cysteine 82–cysteine 137, and cysteine 89–cysteine 98. Position 60 is a 3'-nitrotyrosine (tyrosine 60). 65–69 is a substrate binding site; it reads KNQNT. Residues asparagine 92, asparagine 111, and asparagine 138 are each glycosylated (N-linked (GlcNAc...) asparagine). Histidine 155 functions as the Proton donor in the catalytic mechanism.

The protein belongs to the pancreatic ribonuclease family. In terms of assembly, interacts with and forms a tight 1:1 complex with RNH1. Dimerization of two such complexes may occur.

It is found in the lysosome. The protein localises to the cytoplasmic granule. It carries out the reaction an [RNA] containing cytidine + H2O = an [RNA]-3'-cytidine-3'-phosphate + a 5'-hydroxy-ribonucleotide-3'-[RNA].. It catalyses the reaction an [RNA] containing uridine + H2O = an [RNA]-3'-uridine-3'-phosphate + a 5'-hydroxy-ribonucleotide-3'-[RNA].. Functionally, this is a non-secretory ribonuclease. It is a pyrimidine specific nuclease with a slight preference for U. Cytotoxin and helminthotoxin. Possesses a wide variety of biological activities. The chain is Non-secretory ribonuclease (RNASE2) from Macaca fascicularis (Crab-eating macaque).